The chain runs to 269 residues: MSSKINFVKMHGLGNDFVIINKKDLTGTYDLSQLAKSMAKRHLGIGCDQFIIYEEQNDSYEMIIYNIDGSSAKLCGNATRCLAKLIYLDTGKKDITVVVGNKKLLCHVIDENNISVNVGGVSFNESWMPSRDKIWEFAERYMIDLKETICVDVGNPHLVIFSKLELQDQKIVGEKLQDKALFADGVNVNFAEVRDNKIYLSVWERGSGLTLACGSGACGSFAAGLKLGFIHSPCEVVFKHGSLIMKEENGNIIMQGPASLVAKGMYYCE.

N15, Q49, and N66 together coordinate substrate. Catalysis depends on C75, which acts as the Proton donor. Substrate contacts are provided by residues 76–77 (GN), N155, N187, and 204–205 (ER). The active-site Proton acceptor is the C213. 214-215 (GS) provides a ligand contact to substrate.

It belongs to the diaminopimelate epimerase family. As to quaternary structure, homodimer.

The protein localises to the cytoplasm. It carries out the reaction (2S,6S)-2,6-diaminopimelate = meso-2,6-diaminopimelate. It functions in the pathway amino-acid biosynthesis; L-lysine biosynthesis via DAP pathway; DL-2,6-diaminopimelate from LL-2,6-diaminopimelate: step 1/1. Functionally, catalyzes the stereoinversion of LL-2,6-diaminopimelate (L,L-DAP) to meso-diaminopimelate (meso-DAP), a precursor of L-lysine and an essential component of the bacterial peptidoglycan. In Rickettsia bellii (strain OSU 85-389), this protein is Diaminopimelate epimerase.